The chain runs to 275 residues: NAD kinase (275 aa).

Residue aspartate 66 is the Proton acceptor of the active site. NAD(+)-binding positions include 66-67 (DG), histidine 71, 135-136 (NE), lysine 146, arginine 163, aspartate 165, and 176-181 (TAYAMS).

The protein belongs to the NAD kinase family. A divalent metal cation serves as cofactor.

It localises to the cytoplasm. It catalyses the reaction NAD(+) + ATP = ADP + NADP(+) + H(+). Involved in the regulation of the intracellular balance of NAD and NADP, and is a key enzyme in the biosynthesis of NADP. Catalyzes specifically the phosphorylation on 2'-hydroxyl of the adenosine moiety of NAD to yield NADP. In Methanosphaera stadtmanae (strain ATCC 43021 / DSM 3091 / JCM 11832 / MCB-3), this protein is NAD kinase.